Consider the following 508-residue polypeptide: Photosystem II CP47 reaction center protein (508 aa).

A run of 6 helical transmembrane segments spans residues 21–36, 101–115, 140–156, 203–218, 237–252, and 457–472; these read SVHI…WAGS, IVFS…IWHW, GIHL…FGAF, IAAG…FHLS, VLSS…AFVV, and SFAL…HGAR.

Belongs to the PsbB/PsbC family. PsbB subfamily. In terms of assembly, PSII is composed of 1 copy each of membrane proteins PsbA, PsbB, PsbC, PsbD, PsbE, PsbF, PsbH, PsbI, PsbJ, PsbK, PsbL, PsbM, PsbT, PsbX, PsbY, PsbZ, Psb30/Ycf12, at least 3 peripheral proteins of the oxygen-evolving complex and a large number of cofactors. It forms dimeric complexes. The cofactor is Binds multiple chlorophylls. PSII binds additional chlorophylls, carotenoids and specific lipids..

It localises to the plastid. The protein localises to the chloroplast thylakoid membrane. In terms of biological role, one of the components of the core complex of photosystem II (PSII). It binds chlorophyll and helps catalyze the primary light-induced photochemical processes of PSII. PSII is a light-driven water:plastoquinone oxidoreductase, using light energy to abstract electrons from H(2)O, generating O(2) and a proton gradient subsequently used for ATP formation. In Lemna minor (Common duckweed), this protein is Photosystem II CP47 reaction center protein.